A 361-amino-acid chain; its full sequence is [LysW]-lysine hydrolase (361 aa).

His67 serves as a coordination point for Zn(2+). Asp69 is an active-site residue. Asp91 is a binding site for Zn(2+). Residue Glu124 is the Proton acceptor of the active site. Zn(2+)-binding residues include Glu125, Glu148, and His326.

The protein belongs to the peptidase M20A family. LysK subfamily. In terms of assembly, homotetramer and homooctamer. Zn(2+) is required as a cofactor. Co(2+) serves as cofactor.

The protein resides in the cytoplasm. The catalysed reaction is [amino-group carrier protein]-C-terminal-gamma-(L-lysyl)-L-glutamate + H2O = [amino-group carrier protein]-C-terminal-L-glutamate + L-lysine. It functions in the pathway amino-acid biosynthesis; L-lysine biosynthesis via AAA pathway; L-lysine from L-alpha-aminoadipate (Thermus route): step 5/5. Functionally, catalyzes the release of L-lysine from [LysW]-gamma-L-lysine. In vitro, can deacetylate both N(2)-acetyl-L-lysine and N(2)-acetyl-L-ornithine. This is [LysW]-lysine hydrolase from Thermus thermophilus (strain ATCC BAA-163 / DSM 7039 / HB27).